We begin with the raw amino-acid sequence, 227 residues long: Cytochrome c oxidase subunit 2 (227 aa).

Residues 1 to 14 (MAYPLQLGLQDASS) lie on the Mitochondrial intermembrane side of the membrane. Residues 15–45 (PIMEELMNFHDHTLMIVFLISSLVLYLISLM) traverse the membrane as a helical segment. Topologically, residues 46–59 (LTTKLIHTSTMDAQ) are mitochondrial matrix. A helical membrane pass occupies residues 60-87 (EVETVWTILPAIILILIALPSLRILYMM). Over 88 to 227 (DEINNPVLTV…LFENWSLSLT (140 aa)) the chain is Mitochondrial intermembrane. The Cu cation site is built by H161, C196, E198, C200, H204, and M207. A Mg(2+)-binding site is contributed by E198.

This sequence belongs to the cytochrome c oxidase subunit 2 family. Component of the cytochrome c oxidase (complex IV, CIV), a multisubunit enzyme composed of 14 subunits. The complex is composed of a catalytic core of 3 subunits MT-CO1, MT-CO2 and MT-CO3, encoded in the mitochondrial DNA, and 11 supernumerary subunits COX4I, COX5A, COX5B, COX6A, COX6B, COX6C, COX7A, COX7B, COX7C, COX8 and NDUFA4, which are encoded in the nuclear genome. The complex exists as a monomer or a dimer and forms supercomplexes (SCs) in the inner mitochondrial membrane with NADH-ubiquinone oxidoreductase (complex I, CI) and ubiquinol-cytochrome c oxidoreductase (cytochrome b-c1 complex, complex III, CIII), resulting in different assemblies (supercomplex SCI(1)III(2)IV(1) and megacomplex MCI(2)III(2)IV(2)). Found in a complex with TMEM177, COA6, COX18, COX20, SCO1 and SCO2. Interacts with TMEM177 in a COX20-dependent manner. Interacts with COX20. Interacts with COX16. The cofactor is Cu cation.

Its subcellular location is the mitochondrion inner membrane. It catalyses the reaction 4 Fe(II)-[cytochrome c] + O2 + 8 H(+)(in) = 4 Fe(III)-[cytochrome c] + 2 H2O + 4 H(+)(out). Component of the cytochrome c oxidase, the last enzyme in the mitochondrial electron transport chain which drives oxidative phosphorylation. The respiratory chain contains 3 multisubunit complexes succinate dehydrogenase (complex II, CII), ubiquinol-cytochrome c oxidoreductase (cytochrome b-c1 complex, complex III, CIII) and cytochrome c oxidase (complex IV, CIV), that cooperate to transfer electrons derived from NADH and succinate to molecular oxygen, creating an electrochemical gradient over the inner membrane that drives transmembrane transport and the ATP synthase. Cytochrome c oxidase is the component of the respiratory chain that catalyzes the reduction of oxygen to water. Electrons originating from reduced cytochrome c in the intermembrane space (IMS) are transferred via the dinuclear copper A center (CU(A)) of subunit 2 and heme A of subunit 1 to the active site in subunit 1, a binuclear center (BNC) formed by heme A3 and copper B (CU(B)). The BNC reduces molecular oxygen to 2 water molecules using 4 electrons from cytochrome c in the IMS and 4 protons from the mitochondrial matrix. The chain is Cytochrome c oxidase subunit 2 (MT-CO2) from Taterillus emini (Emin's gerbil).